A 267-amino-acid chain; its full sequence is 5'-nucleotidase SurE (267 aa).

D14, D15, S45, and N100 together coordinate a divalent metal cation.

The protein belongs to the SurE nucleotidase family. The cofactor is a divalent metal cation.

The protein resides in the cytoplasm. The catalysed reaction is a ribonucleoside 5'-phosphate + H2O = a ribonucleoside + phosphate. Its function is as follows. Nucleotidase that shows phosphatase activity on nucleoside 5'-monophosphates. The chain is 5'-nucleotidase SurE from Methanosarcina barkeri (strain Fusaro / DSM 804).